Consider the following 412-residue polypeptide: MNDLIINHIAELILPKSTDKPLKGKELDELNVVKNGTVVIKDGKIVYAGQHTDDYDATETIDASGKVVSPALVDAHTHLTFGGSREHEMSLKRQGKSYLEILEMGGGILSTVNATRETSEDDLFKKAEHDLLTMIKHGVLAVESKSGYGLDRENELKQLKVSNRLAEKYDLDMKHTFLGPHAVPKEASSNEAFLEEMIALLPEVKQYADFADIFCETGVFTIEQSQHYMQKAKEAGFKVKIHADEIDPLGGLELAIDEQAISADHLVASSDKGKEKLRNSDTVAVLLPATTFYLGKEDYADARGMLDNNGAIALATDYNPGSSVTNNLQLVMAIAALKLKLSPSEVWNAVTVNAAKAIDINAGTINTGDKANLVIWDAPNHEYIPYHFGINHAEKVIKDGKVIVDNTLSFKA.

Residues histidine 76 and histidine 78 each coordinate Fe(3+). Zn(2+) contacts are provided by histidine 76 and histidine 78. The 4-imidazolone-5-propanoate site is built by arginine 85, tyrosine 148, and histidine 181. Tyrosine 148 is a binding site for N-formimidoyl-L-glutamate. Histidine 242 provides a ligand contact to Fe(3+). Position 242 (histidine 242) interacts with Zn(2+). Glutamate 245 serves as a coordination point for 4-imidazolone-5-propanoate. Aspartate 317 lines the Fe(3+) pocket. Zn(2+) is bound at residue aspartate 317. Residues asparagine 319 and glycine 321 each contribute to the N-formimidoyl-L-glutamate site. Serine 322 serves as a coordination point for 4-imidazolone-5-propanoate.

This sequence belongs to the metallo-dependent hydrolases superfamily. HutI family. Zn(2+) is required as a cofactor. It depends on Fe(3+) as a cofactor.

The protein resides in the cytoplasm. It catalyses the reaction 4-imidazolone-5-propanoate + H2O = N-formimidoyl-L-glutamate. It participates in amino-acid degradation; L-histidine degradation into L-glutamate; N-formimidoyl-L-glutamate from L-histidine: step 3/3. Its function is as follows. Catalyzes the hydrolytic cleavage of the carbon-nitrogen bond in imidazolone-5-propanoate to yield N-formimidoyl-L-glutamate. It is the third step in the universal histidine degradation pathway. The chain is Imidazolonepropionase from Staphylococcus aureus (strain Mu50 / ATCC 700699).